The following is a 211-amino-acid chain: PITH domain-containing protein 1 (211 aa).

The 173-residue stretch at Glu-20 to Ser-192 folds into the PITH domain. Position 189 is a phosphotyrosine (Tyr-189).

This sequence belongs to the PITHD1 family. Down-regulated in primary acute myeloid leukemia (AML) patients.

It localises to the cytoplasm. Promotes megakaryocyte differentiation by up-regulating RUNX1 expression. Regulates RUNX1 expression by activating the proximal promoter of the RUNX1 gene and by enhancing the translation activity of an internal ribosome entry site (IRES) element in the RUNX1 gene. The sequence is that of PITH domain-containing protein 1 (PITHD1) from Homo sapiens (Human).